The primary structure comprises 228 residues: Small ribosomal subunit protein uS2 (228 aa).

This sequence belongs to the universal ribosomal protein uS2 family.

This chain is Small ribosomal subunit protein uS2, found in Blochmanniella pennsylvanica (strain BPEN).